We begin with the raw amino-acid sequence, 700 residues long: Elongation factor G 1 (700 aa).

The tr-type G domain maps to 8-290 (ERYRNIGISA…AVIDYLPSPA (283 aa)). Residues 17 to 24 (AHIDAGKT), 88 to 92 (DTPGH), and 142 to 145 (NKMD) contribute to the GTP site.

This sequence belongs to the TRAFAC class translation factor GTPase superfamily. Classic translation factor GTPase family. EF-G/EF-2 subfamily.

It localises to the cytoplasm. In terms of biological role, catalyzes the GTP-dependent ribosomal translocation step during translation elongation. During this step, the ribosome changes from the pre-translocational (PRE) to the post-translocational (POST) state as the newly formed A-site-bound peptidyl-tRNA and P-site-bound deacylated tRNA move to the P and E sites, respectively. Catalyzes the coordinated movement of the two tRNA molecules, the mRNA and conformational changes in the ribosome. In Bordetella parapertussis (strain 12822 / ATCC BAA-587 / NCTC 13253), this protein is Elongation factor G 1.